We begin with the raw amino-acid sequence, 440 residues long: UDP-glucose 6-dehydrogenase YwqF (440 aa).

NAD(+) is bound by residues 2–19, Val11, Asp30, Lys35, Thr121, and Glu155; that span reads NITV…GVSL. Residues 151–155, Lys204, Asn208, 249–253, and Gly257 each bind substrate; these read EFLRE and FLKAG. Cys260 serves as the catalytic Nucleophile. NAD(+) is bound at residue Lys263. Lys320 lines the substrate pocket. Arg327 provides a ligand contact to NAD(+).

The protein belongs to the UDP-glucose/GDP-mannose dehydrogenase family. Phosphorylated on tyrosine residue(s). Phosphorylated by YwqD and dephosphorylated by YwqE in vitro.

It is found in the cytoplasm. The enzyme catalyses UDP-alpha-D-glucose + 2 NAD(+) + H2O = UDP-alpha-D-glucuronate + 2 NADH + 3 H(+). Its pathway is nucleotide-sugar biosynthesis; UDP-alpha-D-glucuronate biosynthesis; UDP-alpha-D-glucuronate from UDP-alpha-D-glucose: step 1/1. Competitively inhibited by UDP-glucose. Activated by phosphorylation, which may increase affinity for NAD(+); inhibited by dephosphorylation. Its function is as follows. Catalyzes the conversion of UDP-glucose into UDP-glucuronate, one of the precursors of teichuronic acid. This Bacillus subtilis (strain 168) protein is UDP-glucose 6-dehydrogenase YwqF (ywqF).